Reading from the N-terminus, the 30-residue chain is MITDSQVFIGLVIALVPAILAFKLGLSLYE.

The helical transmembrane segment at 7-27 threads the bilayer; the sequence is VFIGLVIALVPAILAFKLGLS.

The protein belongs to the PsaM family.

The protein localises to the plastid. The protein resides in the chloroplast thylakoid membrane. This is Photosystem I reaction center subunit XII from Cyanidium caldarium (Red alga).